A 104-amino-acid chain; its full sequence is Thioredoxin (104 aa).

Residues 2–104 enclose the Thioredoxin domain; it reads AIVKVTDSDF…NLAEVLDKHL (103 aa). An intrachain disulfide couples C29 to C32.

The protein belongs to the thioredoxin family.

Functionally, component of the thioredoxin-thioredoxin reductase system. Participates in various redox reactions through the reversible oxidation of its active center dithiol to a disulfide and catalyzes dithiol-disulfide exchange reactions. The polypeptide is Thioredoxin (trxA) (Staphylococcus epidermidis (strain ATCC 35984 / DSM 28319 / BCRC 17069 / CCUG 31568 / BM 3577 / RP62A)).